We begin with the raw amino-acid sequence, 694 residues long: Maintenance of telomere capping protein 4 (694 aa).

A compositionally biased stretch (basic and acidic residues) spans 1-12; sequence MTHTNEHDHKAE. Positions 1 to 26 are disordered; that stretch reads MTHTNEHDHKAEQQQNGRGDTTTETV. Residues 13-26 are compositionally biased toward polar residues; it reads QQQNGRGDTTTETV. The residue at position 85 (S85) is a Phosphoserine. Low complexity predominate over residues 211–222; sequence YSPSNESSGSSS. 3 disordered regions span residues 211–287, 325–437, and 465–511; these read YSPS…PEAQ, AKGS…TETY, and KTSN…PVGL. The span at 223 to 243 shows a compositional bias: basic residues; that stretch reads SRRHHGHHIHPRRHLQHHSRV. Residues 244–257 show a composition bias toward polar residues; sequence RTANSVHSNTQSLT. T263 carries the post-translational modification Phosphothreonine. The span at 276 to 287 shows a compositional bias: polar residues; that stretch reads MITKIATTPEAQ. The segment covering 403–417 has biased composition (low complexity); that stretch reads SNGGTSRRSSNNGES. Over residues 418–437 the composition is skewed to polar residues; that stretch reads ISTNSSKSSMGITFGNTETY. Residues 471-485 show a composition bias toward basic and acidic residues; that stretch reads LRAEGEQALESDKEL. Residues S481 and S491 each carry the phosphoserine modification. Y493 bears the Phosphotyrosine mark. A helical membrane pass occupies residues 655–675; the sequence is RLLEFGIVLVLWTIWFLFSVL.

Its subcellular location is the membrane. The protein resides in the cytoplasm. The polypeptide is Maintenance of telomere capping protein 4 (MTC4) (Saccharomyces cerevisiae (strain ATCC 204508 / S288c) (Baker's yeast)).